The sequence spans 440 residues: Probable circularly permuted 1,3-beta-glucanase (440 aa).

The N-terminal stretch at 1-20 (MHYSLFFGAALAASVSTVSA) is a signal peptide. Positions 100–112 (GEKPKRELKPSIH) are enriched in basic and acidic residues. 2 disordered regions span residues 100–126 (GEKPKRELKPSIHERRHGHSHQRFHEK) and 153–195 (PAAP…VAPG). The span at 113–125 (ERRHGHSHQRFHE) shows a compositional bias: basic residues. The span at 153 to 164 (PAAPTSAPGAPG) shows a compositional bias: low complexity. Positions 177-186 (GGDKPKDPKP) are enriched in basic and acidic residues. An ExDxxE motif motif is present at residues 350-355 (EFDVLE).

This sequence belongs to the PGA52 family.

It is found in the secreted. It carries out the reaction Hydrolysis of (1-&gt;3)-beta-D-glucosidic linkages in (1-&gt;3)-beta-D-glucans.. Functionally, probable circularly permuted 1,3-beta-glucanase involved in cell wall modification through beta-1,3-glucan network alterations such as increased branching or remodeling. This chain is Probable circularly permuted 1,3-beta-glucanase, found in Arthroderma benhamiae (strain ATCC MYA-4681 / CBS 112371) (Trichophyton mentagrophytes).